The chain runs to 302 residues: NAD kinase 2 (302 aa).

The active-site Proton acceptor is Asp79. Residues 79 to 80 (DG), 153 to 154 (NE), Asp183, 194 to 199 (TAYSLS), Ala218, and Asn252 contribute to the NAD(+) site.

It belongs to the NAD kinase family. The cofactor is a divalent metal cation.

The protein localises to the cytoplasm. It catalyses the reaction NAD(+) + ATP = ADP + NADP(+) + H(+). In terms of biological role, involved in the regulation of the intracellular balance of NAD and NADP, and is a key enzyme in the biosynthesis of NADP. Catalyzes specifically the phosphorylation on 2'-hydroxyl of the adenosine moiety of NAD to yield NADP. The protein is NAD kinase 2 of Prochlorococcus marinus subsp. pastoris (strain CCMP1986 / NIES-2087 / MED4).